The chain runs to 532 residues: Probable cytochrome c oxidase subunit 1 (532 aa).

Transmembrane regions (helical) follow at residues 33 to 53 (IMYIIFAIFAGIVGGLFSLLF), 74 to 94 (VLITAHAVIMVFFMIMPALFG), 95 to 115 (GFGNYFVPLLIGAPDMAFPRL), 118 to 138 (ISFWLLVPAFILLMGSAFVDG), 163 to 183 (MAIFSLHLTGLSSILGSINLI), 200 to 220 (PLFVWSILVTAFLIILAMPVL), 252 to 272 (LFWFFGHPEVYIVILPGFGIV), and 284 to 304 (IFGYQGMVGAMVIIGFVGFIV). Histidine 79 provides a ligand contact to Fe(II)-heme a. Cu cation-binding residues include histidine 258 and tyrosine 262. Cu cation is bound by residues histidine 307 and histidine 308. 2 helical membrane passes run 318-338 (ALIYFTAGTMIIAIPTGIKIF) and 355-375 (MLFSIGFIILFTIGGVTGIIL). Histidine 393 serves as a coordination point for heme a3. The next 3 helical transmembrane spans lie at 394–414 (FHYTMSLGALFTAFAGFYYWF), 431–451 (FWITFVGVNLTFFPQHFLGLA), and 473–493 (IGAGISMAAALYFVFIVFYTL). Residue histidine 395 participates in Fe(II)-heme a binding.

Belongs to the heme-copper respiratory oxidase family.

It localises to the cell membrane. The enzyme catalyses 4 Fe(II)-[cytochrome c] + O2 + 8 H(+)(in) = 4 Fe(III)-[cytochrome c] + 2 H2O + 4 H(+)(out). The protein operates within energy metabolism; oxidative phosphorylation. Functionally, cytochrome c oxidase is the component of the respiratory chain that catalyzes the reduction of oxygen to water. Subunits 1-3 form the functional core of the enzyme complex. CO I is the catalytic subunit of the enzyme. Electrons originating in cytochrome c are transferred via the copper A center of subunit 2 and heme A of subunit 1 to the bimetallic center formed by heme A3 and copper B. The chain is Probable cytochrome c oxidase subunit 1 (ctaD) from Rickettsia bellii (strain RML369-C).